Reading from the N-terminus, the 452-residue chain is Tubulin alpha-8 chain (452 aa).

Gln-15, Glu-74, Ser-143, Gly-147, Thr-148, Thr-182, Asn-209, and Asn-231 together coordinate GTP. Glu-74 lines the Mg(2+) pocket. Glu-257 is an active-site residue.

It belongs to the tubulin family. Dimer of alpha and beta chains. A typical microtubule is a hollow water-filled tube with an outer diameter of 25 nm and an inner diameter of 15 nM. Alpha-beta heterodimers associate head-to-tail to form protofilaments running lengthwise along the microtubule wall with the beta-tubulin subunit facing the microtubule plus end conferring a structural polarity. Microtubules usually have 13 protofilaments but different protofilament numbers can be found in some organisms and specialized cells. It depends on Mg(2+) as a cofactor.

It localises to the cytoplasm. Its subcellular location is the cytoskeleton. It catalyses the reaction GTP + H2O = GDP + phosphate + H(+). Functionally, tubulin is the major constituent of microtubules, a cylinder consisting of laterally associated linear protofilaments composed of alpha- and beta-tubulin heterodimers. Microtubules grow by the addition of GTP-tubulin dimers to the microtubule end, where a stabilizing cap forms. Below the cap, tubulin dimers are in GDP-bound state, owing to GTPase activity of alpha-tubulin. The polypeptide is Tubulin alpha-8 chain (tba-8) (Caenorhabditis elegans).